A 185-amino-acid polypeptide reads, in one-letter code: Adenylyl-sulfate kinase (185 aa).

13 to 20 (GLSGAGKT) contributes to the ATP binding site. Residue Ser-87 is the Phosphoserine intermediate of the active site.

The protein belongs to the APS kinase family.

The enzyme catalyses adenosine 5'-phosphosulfate + ATP = 3'-phosphoadenylyl sulfate + ADP + H(+). Its pathway is sulfur metabolism; hydrogen sulfide biosynthesis; sulfite from sulfate: step 2/3. In terms of biological role, catalyzes the synthesis of activated sulfate. This chain is Adenylyl-sulfate kinase, found in Halothermothrix orenii (strain H 168 / OCM 544 / DSM 9562).